The following is a 476-amino-acid chain: Probable cytosolic Fe-S cluster assembly factor GH10760 (476 aa).

[4Fe-4S] cluster contacts are provided by Cys-23, Cys-68, Cys-71, Cys-74, Cys-187, Cys-243, Cys-395, and Cys-399.

This sequence belongs to the NARF family.

Functionally, component of the cytosolic iron-sulfur (Fe/S) protein assembly machinery. Required for maturation of extramitochondrial Fe/S proteins. The sequence is that of Probable cytosolic Fe-S cluster assembly factor GH10760 from Drosophila grimshawi (Hawaiian fruit fly).